Consider the following 534-residue polypeptide: Protein tweety homolog 2 (534 aa).

Over 1-44 the chain is Extracellular; it reads MATARVEYIAPWWVYWLHNLPHVDFSLQRESGDFNPKDPGYQQT. The helical transmembrane segment at 45–65 threads the bilayer; it reads LLFVALFIALCAAVNLLFVSG. At 66–87 the chain is on the cytoplasmic side; it reads YLICLCCCKKEDETETKMTSSC. The helical transmembrane segment at 88–108 threads the bilayer; the sequence is CVTWTAAVSGLLCCAAVGIGF. The Extracellular portion of the chain corresponds to 109 to 213; it reads YGNSETNDGV…NASIIEYYRW (105 aa). Ca(2+) contacts are provided by glutamate 113 and aspartate 116. A glycan (N-linked (GlcNAc...) asparagine) is linked at asparagine 129. The short motif at 164–166 is the RGD element; the sequence is RGD. Residues asparagine 197 and asparagine 204 are each glycosylated (N-linked (GlcNAc...) asparagine). A helical transmembrane segment spans residues 214 to 234; it reads LSYLILFITDVVICLVTCLGL. The Cytoplasmic portion of the chain corresponds to 235–240; that stretch reads AKKSKC. Residues 241–261 form a helical membrane-spanning segment; sequence LLLTMLCCGLIALMLSWASLA. The Extracellular segment spans residues 262-388; it reads LETSSAVGTS…IGICYDGVEG (127 aa). 2 cysteine pairs are disulfide-bonded: cysteine 274/cysteine 382 and cysteine 300/cysteine 367. Asparagine 352 is a glycosylation site (N-linked (GlcNAc...) asparagine). A helical membrane pass occupies residues 389 to 409; that stretch reads LLYLSLFSLLAAVAFTAMVCA. Topologically, residues 410–534 are cytoplasmic; the sequence is MPRAWKHLAA…PNIYSNVFPA (125 aa).

The protein belongs to the tweety family. As to quaternary structure, forms cis-homodimers in the presence of Ca(+2) and forms monomers and trans-dimers in the absence of Ca(2+).

The protein resides in the cell membrane. The enzyme catalyses chloride(in) = chloride(out). It catalyses the reaction L-glutamate(out) = L-glutamate(in). May act as a calcium-independent, swelling-dependent volume-regulated anion channel (VRAC-swell) which plays a pivotal role in the process of regulatory volume decrease (RVD) in the brain through the efflux of anions like chloride and organic osmolytes like glutamate. Probable large-conductance Ca(2+)-activated chloride channel. In Xenopus laevis (African clawed frog), this protein is Protein tweety homolog 2 (ttyh2).